We begin with the raw amino-acid sequence, 230 residues long: Cell division ATP-binding protein FtsE (230 aa).

Positions 4–229 (IEMRDVVKKY…DESKGEYGYD (226 aa)) constitute an ABC transporter domain. An ATP-binding site is contributed by 37 to 44 (GPSGAGKS).

It belongs to the ABC transporter superfamily. As to quaternary structure, homodimer. Interacts with FtsX; forms a membrane-associated complex. Interacts with pcsB.

It is found in the cell membrane. The enzyme catalyses ATP + H2O = ADP + phosphate + H(+). Its function is as follows. Part of the ABC transporter FtsEX involved in cellular division. Has ATPase activity. Essential for cell division and viability. The chain is Cell division ATP-binding protein FtsE from Streptococcus pneumoniae serotype 2 (strain D39 / NCTC 7466).